We begin with the raw amino-acid sequence, 37 residues long: uncharacterized protein (37 aa).

A helical transmembrane segment spans residues 1–21 (MQDLEIFLSIFAFIFVFYFGA).

The protein resides in the endoplasmic reticulum membrane. This is an uncharacterized protein from Saccharomyces cerevisiae (strain ATCC 204508 / S288c) (Baker's yeast).